Consider the following 543-residue polypeptide: Plant intracellular Ras-group-related LRR protein 5 (543 aa).

LRR repeat units lie at residues 239-262, 264-284, 285-307, 309-331, 332-354, 356-377, 378-400, 402-424, 426-448, and 449-470; these read LQDV…IGSL, YLTK…AFGE, LSNL…SFGN, TSLA…LGKL, ANLR…IGSC, SLVE…IGKL, EKLE…VGSL, RLRE…CFAT, LVKL…IGNL, and EMLE…SFRC. The LRR 11; degenerate repeat unit spans residues 472–494; the sequence is SRLRVFHADETPLEFPPREVVKL. The GVYW; degenerate motif lies at 495-502; sequence GAQAVVKY.

It belongs to the SHOC2 family. In terms of tissue distribution, widely expressed.

Functionally, leucine-rich repeat protein that likely mediates protein interactions, possibly in the context of signal transduction. This Oryza sativa subsp. japonica (Rice) protein is Plant intracellular Ras-group-related LRR protein 5 (IRL5).